An 89-amino-acid chain; its full sequence is Large ribosomal subunit protein uL23c (89 aa).

This sequence belongs to the universal ribosomal protein uL23 family. As to quaternary structure, part of the 50S ribosomal subunit.

Its subcellular location is the plastid. The protein resides in the chloroplast. Its function is as follows. Binds to 23S rRNA. This Staurastrum punctulatum (Green alga) protein is Large ribosomal subunit protein uL23c (rpl23).